Reading from the N-terminus, the 437-residue chain is Ribosomal protein uS12 methylthiotransferase RimO (437 aa).

The MTTase N-terminal domain occupies 9 to 128; it reads NKINVITLGC…LLKALGADYK (120 aa). Residues Cys-18, Cys-57, Cys-91, Cys-152, Cys-156, and Cys-159 each contribute to the [4Fe-4S] cluster site. Positions 138 to 368 constitute a Radical SAM core domain; it reads TTPKNYAYLK…MELQSQISWD (231 aa). One can recognise a TRAM domain in the interval 371 to 437; sequence QEKVGQVFRC…TEFDLYGEPA (67 aa).

This sequence belongs to the methylthiotransferase family. RimO subfamily. Requires [4Fe-4S] cluster as cofactor.

The protein localises to the cytoplasm. The enzyme catalyses L-aspartate(89)-[ribosomal protein uS12]-hydrogen + (sulfur carrier)-SH + AH2 + 2 S-adenosyl-L-methionine = 3-methylsulfanyl-L-aspartate(89)-[ribosomal protein uS12]-hydrogen + (sulfur carrier)-H + 5'-deoxyadenosine + L-methionine + A + S-adenosyl-L-homocysteine + 2 H(+). Functionally, catalyzes the methylthiolation of an aspartic acid residue of ribosomal protein uS12. In Flavobacterium johnsoniae (strain ATCC 17061 / DSM 2064 / JCM 8514 / BCRC 14874 / CCUG 350202 / NBRC 14942 / NCIMB 11054 / UW101) (Cytophaga johnsonae), this protein is Ribosomal protein uS12 methylthiotransferase RimO.